The following is a 335-amino-acid chain: Biotin synthase (335 aa).

One can recognise a Radical SAM core domain in the interval 46 to 274 (YNIQLASLFS…KSKIRLSAGR (229 aa)). 3 residues coordinate [4Fe-4S] cluster: Cys-61, Cys-65, and Cys-68. Positions 105, 137, 197, and 269 each coordinate [2Fe-2S] cluster.

It belongs to the radical SAM superfamily. Biotin synthase family. In terms of assembly, homodimer. [4Fe-4S] cluster serves as cofactor. It depends on [2Fe-2S] cluster as a cofactor.

The enzyme catalyses (4R,5S)-dethiobiotin + (sulfur carrier)-SH + 2 reduced [2Fe-2S]-[ferredoxin] + 2 S-adenosyl-L-methionine = (sulfur carrier)-H + biotin + 2 5'-deoxyadenosine + 2 L-methionine + 2 oxidized [2Fe-2S]-[ferredoxin]. The protein operates within cofactor biosynthesis; biotin biosynthesis; biotin from 7,8-diaminononanoate: step 2/2. In terms of biological role, catalyzes the conversion of dethiobiotin (DTB) to biotin by the insertion of a sulfur atom into dethiobiotin via a radical-based mechanism. This is Biotin synthase from Prochlorococcus marinus (strain AS9601).